Here is a 133-residue protein sequence, read N- to C-terminus: ATP synthase epsilon chain, chloroplastic (133 aa).

This sequence belongs to the ATPase epsilon chain family. F-type ATPases have 2 components, CF(1) - the catalytic core - and CF(0) - the membrane proton channel. CF(1) has five subunits: alpha(3), beta(3), gamma(1), delta(1), epsilon(1). CF(0) has three main subunits: a, b and c.

The protein localises to the plastid. Its subcellular location is the chloroplast thylakoid membrane. Produces ATP from ADP in the presence of a proton gradient across the membrane. The chain is ATP synthase epsilon chain, chloroplastic from Helianthus annuus (Common sunflower).